A 209-amino-acid polypeptide reads, in one-letter code: Ribosome maturation factor RimP (209 aa).

Belongs to the RimP family.

It is found in the cytoplasm. Functionally, required for maturation of 30S ribosomal subunits. The sequence is that of Ribosome maturation factor RimP from Bartonella bacilliformis (strain ATCC 35685 / KC583 / Herrer 020/F12,63).